The chain runs to 926 residues: Thyroid peroxidase (926 aa).

The N-terminal stretch at Met1 to Ala14 is a signal peptide. Topologically, residues Phe19–Arg844 are extracellular. A glycan (N-linked (GlcNAc...) asparagine) is linked at Asn129. Cysteines 142 and 158 form a disulfide. Asp238 is a heme b binding site. His239 functions as the Proton acceptor in the catalytic mechanism. Ca(2+) is bound at residue Asp240. Cystine bridges form between Cys259–Cys269 and Cys263–Cys286. Asn277 and Asn307 each carry an N-linked (GlcNAc...) asparagine glycan. Positions 321, 323, 325, and 327 each coordinate Ca(2+). A glycan (N-linked (GlcNAc...) asparagine) is linked at Asn342. Positions 398 and 493 each coordinate heme b. 7 cysteine pairs are disulfide-bonded: Cys596/Cys653, Cys694/Cys719, Cys740/Cys780, Cys766/Cys792, Cys798/Cys812, Cys806/Cys821, and Cys823/Cys836. The 56-residue stretch at Asp738–Lys793 folds into the Sushi domain. Positions Asp794–Val837 constitute an EGF-like; calcium-binding domain. Residues Ala845–Cys869 form a helical membrane-spanning segment. The Cytoplasmic segment spans residues Arg870–Glu926.

The protein belongs to the peroxidase family. XPO subfamily. In terms of assembly, interacts with DUOX1, DUOX2 and CYBA. Ca(2+) serves as cofactor. Heme b is required as a cofactor. Post-translationally, heme is covalently bound through a H(2)O(2)-dependent autocatalytic process. Heme insertion is important for the delivery of protein at the cell surface. In terms of processing, cleaved in its N-terminal part. N-glycosylated; contains mannose and N-acetylglucosamine.

The protein localises to the membrane. The enzyme catalyses 2 iodide + H2O2 + 2 H(+) = diiodine + 2 H2O. It carries out the reaction [thyroglobulin]-L-tyrosine + iodide + H2O2 + H(+) = [thyroglobulin]-3-iodo-L-tyrosine + 2 H2O. It catalyses the reaction [thyroglobulin]-3-iodo-L-tyrosine + iodide + H2O2 + H(+) = [thyroglobulin]-3,5-diiodo-L-tyrosine + 2 H2O. The catalysed reaction is 2 [thyroglobulin]-3,5-diiodo-L-tyrosine + H2O2 = [thyroglobulin]-L-thyroxine + [thyroglobulin]-dehydroalanine + 2 H2O. The enzyme catalyses [thyroglobulin]-3-iodo-L-tyrosine + [thyroglobulin]-3,5-diiodo-L-tyrosine + H2O2 = [thyroglobulin]-3,3',5-triiodo-L-thyronine + [thyroglobulin]-dehydroalanine + 2 H2O. The protein operates within hormone biosynthesis; thyroid hormone biosynthesis. In terms of biological role, iodination and coupling of the hormonogenic tyrosines in thyroglobulin to yield the thyroid hormones T(3) and T(4). This Sus scrofa (Pig) protein is Thyroid peroxidase (TPO).